A 380-amino-acid chain; its full sequence is Probable polyglutamine synthesis accessory protein MT0602 (380 aa).

The protein belongs to the CapA family.

Its function is as follows. Could be involved in the biosynthesis, transport or localization of poly-alpha-L-glutamine (PLG), a cell wall component. Contributes to stress tolerance and virulence. This Mycobacterium tuberculosis (strain CDC 1551 / Oshkosh) protein is Probable polyglutamine synthesis accessory protein MT0602.